The chain runs to 647 residues: Threonine--tRNA ligase (647 aa).

The TGS domain occupies 1–61 (MINITFPDGA…TEDGSIEIVT (61 aa)). The catalytic stretch occupies residues 242-540 (DHRKLGKELD…LIENYKGAFP (299 aa)). Zn(2+) is bound by residues Cys-336, His-387, and His-517.

The protein belongs to the class-II aminoacyl-tRNA synthetase family. Homodimer. It depends on Zn(2+) as a cofactor.

It is found in the cytoplasm. It catalyses the reaction tRNA(Thr) + L-threonine + ATP = L-threonyl-tRNA(Thr) + AMP + diphosphate + H(+). In terms of biological role, catalyzes the attachment of threonine to tRNA(Thr) in a two-step reaction: L-threonine is first activated by ATP to form Thr-AMP and then transferred to the acceptor end of tRNA(Thr). Also edits incorrectly charged L-seryl-tRNA(Thr). This is Threonine--tRNA ligase from Streptococcus pneumoniae (strain 70585).